The primary structure comprises 538 residues: Phosphoenolpyruvate carboxykinase (ATP) (538 aa).

Positions 64, 205, and 211 each coordinate substrate. Residues Lys211, His230, and 246–254 (GLSGTGKTT) contribute to the ATP site. The Mn(2+) site is built by Lys211 and His230. Residue Asp267 coordinates Mn(2+). ATP-binding positions include Glu295, Arg331, 447-448 (RI), and Thr453. Substrate is bound at residue Arg331.

This sequence belongs to the phosphoenolpyruvate carboxykinase (ATP) family. As to quaternary structure, monomer. Mn(2+) serves as cofactor.

It is found in the cytoplasm. The enzyme catalyses oxaloacetate + ATP = phosphoenolpyruvate + ADP + CO2. It participates in carbohydrate biosynthesis; gluconeogenesis. Involved in the gluconeogenesis. Catalyzes the conversion of oxaloacetate (OAA) to phosphoenolpyruvate (PEP) through direct phosphoryl transfer between the nucleoside triphosphate and OAA. In Haemophilus influenzae (strain 86-028NP), this protein is Phosphoenolpyruvate carboxykinase (ATP).